Consider the following 595-residue polypeptide: uncharacterized protein (595 aa).

A disordered region spans residues 112–180 (VRPPGYDPES…KDVFGRALPT (69 aa)). 2 stretches are compositionally biased toward basic and acidic residues: residues 120–133 (ESAK…EKHK) and 161–174 (RTQE…KDVF). Residues 211 to 228 (VKCLRCGNFGHQSGDRDC) form a CCHC-type; degenerate zinc finger. Disordered regions lie at residues 254–290 (HTDP…IVAE) and 310–595 (KSMS…RRRN). Over residues 256–267 (DPSEPLKWELKQ) the composition is skewed to basic and acidic residues. Composition is skewed to basic residues over residues 316-331 (KKRK…KHSS) and 351-364 (RGSK…KKSK). Composition is skewed to basic and acidic residues over residues 414-428 (HYYD…EIVD), 470-539 (VSEK…HVYE), and 547-565 (FSDR…ESNR). Residues 584 to 595 (RKHRYSTNRRRN) are compositionally biased toward basic residues.

This is an uncharacterized protein from Arabidopsis thaliana (Mouse-ear cress).